A 156-amino-acid chain; its full sequence is Small ribosomal subunit protein uS7 (156 aa).

Belongs to the universal ribosomal protein uS7 family. Part of the 30S ribosomal subunit. Contacts proteins S9 and S11.

In terms of biological role, one of the primary rRNA binding proteins, it binds directly to 16S rRNA where it nucleates assembly of the head domain of the 30S subunit. Is located at the subunit interface close to the decoding center, probably blocks exit of the E-site tRNA. This Blochmanniella pennsylvanica (strain BPEN) protein is Small ribosomal subunit protein uS7.